We begin with the raw amino-acid sequence, 227 residues long: Cytochrome c oxidase subunit 2 (227 aa).

Topologically, residues 1–14 are mitochondrial intermembrane; that stretch reads MAHAAQVGLQDATS. A helical membrane pass occupies residues 15 to 45; the sequence is PIMEELVIFHDHALMIIFLICFLVLYALFLT. At 46–59 the chain is on the mitochondrial matrix side; sequence LTTKLTNTSISDAQ. The helical transmembrane segment at 60–87 threads the bilayer; sequence EMETIWTILPAIILILIALPSLRILYLT. Topologically, residues 88–227 are mitochondrial intermembrane; the sequence is DEINDPSFTI…IFEMGPVFTL (140 aa). Cu cation is bound by residues His-161, Cys-196, Glu-198, Cys-200, His-204, and Met-207. A Mg(2+)-binding site is contributed by Glu-198.

The protein belongs to the cytochrome c oxidase subunit 2 family. As to quaternary structure, component of the cytochrome c oxidase (complex IV, CIV), a multisubunit enzyme composed of 14 subunits. The complex is composed of a catalytic core of 3 subunits MT-CO1, MT-CO2 and MT-CO3, encoded in the mitochondrial DNA, and 11 supernumerary subunits COX4I, COX5A, COX5B, COX6A, COX6B, COX6C, COX7A, COX7B, COX7C, COX8 and NDUFA4, which are encoded in the nuclear genome. The complex exists as a monomer or a dimer and forms supercomplexes (SCs) in the inner mitochondrial membrane with NADH-ubiquinone oxidoreductase (complex I, CI) and ubiquinol-cytochrome c oxidoreductase (cytochrome b-c1 complex, complex III, CIII), resulting in different assemblies (supercomplex SCI(1)III(2)IV(1) and megacomplex MCI(2)III(2)IV(2)). Found in a complex with TMEM177, COA6, COX18, COX20, SCO1 and SCO2. Interacts with TMEM177 in a COX20-dependent manner. Interacts with COX20. Interacts with COX16. Cu cation serves as cofactor.

The protein resides in the mitochondrion inner membrane. The catalysed reaction is 4 Fe(II)-[cytochrome c] + O2 + 8 H(+)(in) = 4 Fe(III)-[cytochrome c] + 2 H2O + 4 H(+)(out). Component of the cytochrome c oxidase, the last enzyme in the mitochondrial electron transport chain which drives oxidative phosphorylation. The respiratory chain contains 3 multisubunit complexes succinate dehydrogenase (complex II, CII), ubiquinol-cytochrome c oxidoreductase (cytochrome b-c1 complex, complex III, CIII) and cytochrome c oxidase (complex IV, CIV), that cooperate to transfer electrons derived from NADH and succinate to molecular oxygen, creating an electrochemical gradient over the inner membrane that drives transmembrane transport and the ATP synthase. Cytochrome c oxidase is the component of the respiratory chain that catalyzes the reduction of oxygen to water. Electrons originating from reduced cytochrome c in the intermembrane space (IMS) are transferred via the dinuclear copper A center (CU(A)) of subunit 2 and heme A of subunit 1 to the active site in subunit 1, a binuclear center (BNC) formed by heme A3 and copper B (CU(B)). The BNC reduces molecular oxygen to 2 water molecules using 4 electrons from cytochrome c in the IMS and 4 protons from the mitochondrial matrix. This is Cytochrome c oxidase subunit 2 (MT-CO2) from Pongo abelii (Sumatran orangutan).